A 518-amino-acid chain; its full sequence is Motile sperm domain-containing protein 2 (518 aa).

Over 1–496 the chain is Cytoplasmic; sequence MAENHAQNKA…QVQRCIWFQQ (496 aa). A CRAL-TRIO domain is found at 82–239; the sequence is ESSIPRWLLE…HMGGTDPFKY (158 aa). The disordered stretch occupies residues 252–308; it reads PLCENGPITSEDETSSKEDIESDGKETLETISNEEQTPLLKKINPTESTSKAEENEK. Positions 265–279 are enriched in basic and acidic residues; the sequence is TSSKEDIESDGKETL. The 119-residue stretch at 327–445 folds into the MSP domain; the sequence is LLHISPAEEL…MEHRLRCHTV (119 aa). Residues 365-366 form a required for FFAT motif binding and phosphorylated FFAT motif binding region; the sequence is RT. Residues 497 to 518 traverse the membrane as a helical; Anchor for type IV membrane protein segment; it reads LLLSLTMLLLAFVTSFFYLLYS.

Homooligomer. Interacts (via MSP domain) with STARD3NL (via FFAT motif), RMDN3 (via FFAT motif), OSBPL1A (via FFAT motif) and CERT1 (via FFAT motif). Interacts (via MSP domain) with STARD3 (via phosphorylated FFAT motif); this interaction depends on the critical phosphorylation of STARD3 on 'Ser-209'. Interacts with RB1CC1 (via phosphorylated FFAT motif), MIGA2 (via phosphorylated FFAT motif) and OSBPL1A (via FFAT motif). Highly expressed in CD14(+) monocytes, and at lower levels in neutrophils. Does not show significant expression in B-cells or T-cells.

It localises to the endoplasmic reticulum membrane. Endoplasmic reticulum-anchored protein that mediates the formation of contact sites between the endoplasmic (ER) and endosomes, mitochondria or Golgi through interaction with conventional- and phosphorylated-FFAT-containing organelle-bound proteins. In addition, forms endoplasmic reticulum (ER)-lipid droplets (LDs) contacts through a direct protein-membrane interaction and participates in LDs homeostasis. The attachment mechanism involves an amphipathic helix that has an affinity for lipid packing defects present at the surface of LDs. Promotes migration of primary monocytes and neutrophils, in response to various chemokines. The polypeptide is Motile sperm domain-containing protein 2 (Homo sapiens (Human)).